The chain runs to 272 residues: Acetylglutamate kinase (272 aa).

Substrate-binding positions include 46–47 (GA), arginine 68, and asparagine 166.

Belongs to the acetylglutamate kinase family. ArgB subfamily.

The protein localises to the cytoplasm. The enzyme catalyses N-acetyl-L-glutamate + ATP = N-acetyl-L-glutamyl 5-phosphate + ADP. It participates in amino-acid biosynthesis; L-arginine biosynthesis; N(2)-acetyl-L-ornithine from L-glutamate: step 2/4. Catalyzes the ATP-dependent phosphorylation of N-acetyl-L-glutamate. The chain is Acetylglutamate kinase from Dehalococcoides mccartyi (strain ATCC BAA-2100 / JCM 16839 / KCTC 5957 / BAV1).